The following is an 892-amino-acid chain: Alanine--tRNA ligase (892 aa).

Residues His578, His582, Cys681, and His685 each coordinate Zn(2+).

The protein belongs to the class-II aminoacyl-tRNA synthetase family. The cofactor is Zn(2+).

It localises to the cytoplasm. The catalysed reaction is tRNA(Ala) + L-alanine + ATP = L-alanyl-tRNA(Ala) + AMP + diphosphate. Catalyzes the attachment of alanine to tRNA(Ala) in a two-step reaction: alanine is first activated by ATP to form Ala-AMP and then transferred to the acceptor end of tRNA(Ala). Also edits incorrectly charged Ser-tRNA(Ala) and Gly-tRNA(Ala) via its editing domain. This is Alanine--tRNA ligase from Cutibacterium acnes (strain DSM 16379 / KPA171202) (Propionibacterium acnes).